The chain runs to 373 residues: Exonuclease V (373 aa).

Cysteine 92 is a binding site for [4Fe-4S] cluster. Residues aspartate 182 and glutamate 196 each contribute to the Mg(2+) site. The [4Fe-4S] cluster site is built by cysteine 343, cysteine 346, and cysteine 352.

Belongs to the EXO5 family. In terms of assembly, monomer; monomeric form has weak exonuclease activity. Homodimer; homodimeric form is unsure but has much higher exonuclease activity, suggesting that it could homodimerize upon DNA-binding. Interacts with the replication protein A (RPA) complex. [4Fe-4S] cluster is required as a cofactor. It depends on Mg(2+) as a cofactor.

It localises to the nucleus. It is found in the cytoplasm. The protein localises to the cytosol. Its function is as follows. Single-stranded DNA (ssDNA) bidirectional exonuclease involved in DNA repair. Probably involved in DNA repair following ultraviolet (UV) irradiation and interstrand cross-links (ICLs) damage. Has both 5'-3' and 3'-5' exonuclease activities with a strong preference for 5'-ends. Acts as a sliding exonuclease that loads at ssDNA ends and then slides along the ssDNA prior to cutting; however the sliding and the 3'-5' exonuclease activities are abolished upon binding to the replication protein A (RPA) complex that enforces 5'-directionality activity. The polypeptide is Exonuclease V (EXO5) (Homo sapiens (Human)).